Here is a 176-residue protein sequence, read N- to C-terminus: Glyoxalase domain-containing protein RDO1 (176 aa).

The 120-residue stretch at 53–172 (SLDHLVITCH…DNNLIELSSY (120 aa)) folds into the VOC domain. The active-site Proton donor/acceptor is the glutamate 168.

Belongs to the glyoxalase I family.

Its pathway is secondary metabolite biosynthesis. Functionally, glyoxalase domain-containing protein; part of the gene cluster that mediates the biosynthesis of itaconic acid and 2-hydroxyparaconate. Cis-aconitate is secreted by the mitochondrial tricarboxylate transporter MTT1. In the cytosol cis-aconitate is converted into trans-aconitate via isomerization by the aconitate-delta-isomerase ADI1. Decarboxylation of trans-aconitate by the trans-aconitate decarboxylase TAD1 then leads then to the production of itaconic acid. The cytochrome P450 monooxygenase CYP3 further converts itaconate to 2-hydroxyparaconate via oxidation of the double bond, leading to a transient epoxide, which can subsequently be lactonized to produce 2-hydroxyparaconate. Secretion of itaconate and possibly 2-hydroxyparaconate into the medium is mediated by the major facilitator ITP1. The glyoxalase domain-containing protein RDO1 is not involved in the biosynthesis of itaconate and 2-hydroxyparaconate, however, it might play a role in the further conversion of 2-hydroxyparaconate to itatartarate. This Mycosarcoma maydis (Corn smut fungus) protein is Glyoxalase domain-containing protein RDO1.